A 327-amino-acid polypeptide reads, in one-letter code: uncharacterized protein (327 aa).

Topologically, residues 1 to 19 are cytoplasmic; sequence MSIAQDRGIVFKLLSIYRA. The chain crosses the membrane as a helical span at residues 20–40; the sequence is AAGIFMALAQLIVIFFGYCDF. Topologically, residues 41-51 are extracellular; the sequence is KIKGYRIASYN. A helical transmembrane segment spans residues 52-72; the sequence is APTFASSFIILAVCLLLVVVL. Residues 73-104 lie on the Cytoplasmic side of the membrane; it reads ENPEVKVTNSENSLFSALKQFFRVERKKLISC. A helical membrane pass occupies residues 105–125; the sequence is LILLWSMFLSSFIMSEVVYFM. The Extracellular segment spans residues 126–141; the sequence is PLFLTLHVNWDTKFQG. The chain crosses the membrane as a helical span at residues 142-162; the sequence is IAFMVASILGVTGSYFAPKLI. The Cytoplasmic segment spans residues 163–199; the sequence is NVGCSCGRAKDGGLEESDTTGSETVEVKKKDSLYSGQ. The helical transmembrane segment at 200–220 threads the bilayer; the sequence is VFLSIFALFVSLLGQAFMIGA. Residues 221–235 lie on the Extracellular side of the membrane; the sequence is SEALKHKSMPPTNSG. Residues 236 to 256 traverse the membrane as a helical segment; sequence IFFSAGMSITLLGYNFLASSI. The Cytoplasmic portion of the chain corresponds to 257-275; sequence PALFSMYIDPKLKVQLMPS. Residues 276-296 traverse the membrane as a helical segment; the sequence is IGAISGIGKLVAPIVLAALYG. The Extracellular portion of the chain corresponds to 297-300; the sequence is TRLG. A helical transmembrane segment spans residues 301-321; it reads LSIAVGFGMILVAVSIPPLIW. Residues 322–327 are Cytoplasmic-facing; it reads LRKKRC.

It is found in the membrane. This is an uncharacterized protein from Saccharomyces cerevisiae (strain ATCC 204508 / S288c) (Baker's yeast).